An 81-amino-acid polypeptide reads, in one-letter code: Sec-independent protein translocase protein TatA (81 aa).

Residues 1–21 (MGGLQPWHWVIVIAVFVLLFG) traverse the membrane as a helical segment. Over residues 46–56 (MQAESKGDEPK) the composition is skewed to basic and acidic residues. A disordered region spans residues 46-81 (MQAESKGDEPKPATPIASERVDTTAPEQQSTDRHTA).

Belongs to the TatA/E family. The Tat system comprises two distinct complexes: a TatABC complex, containing multiple copies of TatA, TatB and TatC subunits, and a separate TatA complex, containing only TatA subunits. Substrates initially bind to the TatABC complex, which probably triggers association of the separate TatA complex to form the active translocon.

Its subcellular location is the cell membrane. In terms of biological role, part of the twin-arginine translocation (Tat) system that transports large folded proteins containing a characteristic twin-arginine motif in their signal peptide across membranes. TatA could form the protein-conducting channel of the Tat system. The chain is Sec-independent protein translocase protein TatA from Mycolicibacterium smegmatis (strain ATCC 700084 / mc(2)155) (Mycobacterium smegmatis).